Consider the following 368-residue polypeptide: Phospho-N-acetylmuramoyl-pentapeptide-transferase (368 aa).

The next 9 helical transmembrane spans lie at 23–43 (YLTF…IFAG), 72–92 (VPTM…FLWA), 98–118 (HVWL…IDDY), 139–159 (VTLG…SVLL), 170–190 (LSVD…TAVS), 201–221 (GLAA…AYLC), 238–258 (AGEV…FLWF), 281–301 (VIAL…VFFV), and 345–365 (KIVI…LMTL).

The protein belongs to the glycosyltransferase 4 family. MraY subfamily. It depends on Mg(2+) as a cofactor.

The protein resides in the cell inner membrane. It catalyses the reaction UDP-N-acetyl-alpha-D-muramoyl-L-alanyl-gamma-D-glutamyl-meso-2,6-diaminopimeloyl-D-alanyl-D-alanine + di-trans,octa-cis-undecaprenyl phosphate = di-trans,octa-cis-undecaprenyl diphospho-N-acetyl-alpha-D-muramoyl-L-alanyl-D-glutamyl-meso-2,6-diaminopimeloyl-D-alanyl-D-alanine + UMP. It participates in cell wall biogenesis; peptidoglycan biosynthesis. Catalyzes the initial step of the lipid cycle reactions in the biosynthesis of the cell wall peptidoglycan: transfers peptidoglycan precursor phospho-MurNAc-pentapeptide from UDP-MurNAc-pentapeptide onto the lipid carrier undecaprenyl phosphate, yielding undecaprenyl-pyrophosphoryl-MurNAc-pentapeptide, known as lipid I. The chain is Phospho-N-acetylmuramoyl-pentapeptide-transferase from Chlorobaculum tepidum (strain ATCC 49652 / DSM 12025 / NBRC 103806 / TLS) (Chlorobium tepidum).